A 457-amino-acid chain; its full sequence is L-asparaginase-like protein GA18140 (457 aa).

A signal peptide spans 1–20 (MRYLCRAQLLSLLLLPLLKA). 3 disulfides stabilise this stretch: Cys-72-Cys-78, Cys-172-Cys-188, and Cys-327-Cys-354.

It belongs to the Ntn-hydrolase family.

The protein is L-asparaginase-like protein GA18140 of Drosophila pseudoobscura pseudoobscura (Fruit fly).